The sequence spans 413 residues: Alpha-1-antitrypsin-like protein CM55-SI (413 aa).

A signal peptide spans 1–24 (MPSSISWGLLLLAALSCLGPGSLA). Gln25 is subject to Pyrrolidone carboxylic acid. Asn65, Asn102, Asn165, and Asn266 each carry an N-linked (GlcNAc...) asparagine glycan. The RCL stretch occupies residues 368-387 (GGTVLGNIRSILRYEVIFDR).

It belongs to the serpin family. As to expression, expressed in liver.

The protein is Alpha-1-antitrypsin-like protein CM55-SI of Tamias sibiricus (Siberian chipmunk).